A 372-amino-acid polypeptide reads, in one-letter code: Protein phosphatase Mn(2+)-dependent 1K (372 aa).

The N-terminal 29 residues, 1 to 29, are a transit peptide targeting the mitochondrion; sequence MLSAAFITLLRSGGNQVKKRVLLSSILLQ. Residues 46–61 are critical for association with the BCKDH complex; it reads RCSRFDPDGSGQPATW. In terms of domain architecture, PPM-type phosphatase spans 94-346; sequence NVGCASLIGK…DNSTAVVVPF (253 aa). Residues Asp-127 and Gly-128 each coordinate Mn(2+). At Ser-248 the chain carries Phosphoserine. 2 residues coordinate Mn(2+): Asp-298 and Asp-337.

Belongs to the PP2C family. In terms of assembly, monomer. Interacts with E1 and E2 components of the branched-chain alpha-ketoacid dehydrogenase (BCKDH) complex; this interaction requires colocalization in mitochondria. Interacts with BCKDHA but not with BCKDHB of the E1 component. Interacts with the 24-meric E2 core composed of DBT monomers with a 24:1 stoichiometry; the N-terminal region (residues 49-61) of PPM1K and C-terminal linker of the lipoyl domain of DBT (residues 145-160) are critical for this interaction, whereas the lipoyl prosthetic group is dispensable. Competes with BCKDK for binding to the E2 core; this interaction is modulated by branched-chain alpha-keto acids. At steady state, BCKDH holoenzyme preferentially binds BCKDK and BCKDHA is phosphorylated. In response to high levels of branched-chain alpha-keto acids, the inhibitory BCKDK is replaced by activating PPM1K leading to BCKDHA dephosphorylation and BCAA degradation. It depends on Mn(2+) as a cofactor. Highly expressed in the heart, kidney, brain and liver and to a lesser extent in testis, lung, spleen and adipose tissue. Very low amount in muscle (at protein level). Also expressed in the thymus (at protein level) and the diaphragm. Significantly reduced in hypertrophied hearts.

The protein resides in the mitochondrion matrix. It catalyses the reaction O-phospho-L-seryl-[3-methyl-2-oxobutanoate dehydrogenase] + H2O = L-seryl-[3-methyl-2-oxobutanoate dehydrogenase] + phosphate. It carries out the reaction O-phospho-L-seryl-[protein] + H2O = L-seryl-[protein] + phosphate. It participates in protein modification. Functionally, serine/threonine-protein phosphatase component of macronutrients metabolism. Forms a functional kinase and phosphatase pair with BCKDK, serving as a metabolic regulatory node that coordinates branched-chain amino acids (BCAAs) with glucose and lipid metabolism via two distinct phosphoprotein targets: mitochondrial BCKDHA subunit of the branched-chain alpha-ketoacid dehydrogenase (BCKDH) complex and cytosolic ACLY, a lipogenic enzyme of Krebs cycle. At high levels of branched-chain ketoacids, dephosphorylates and activates mitochondrial BCKDH complex, a multisubunit complex consisting of three multimeric components each involved in different steps of BCAA catabolism: E1 composed of BCKDHA and BCKDHB, E2 core composed of DBT monomers, and E3 composed of DLD monomers. Tightly associates with the E2 component of BCKDH complex and dephosphorylates BCKDHA on Ser-334. Regulates the reversible phosphorylation of ACLY in response to changes in cellular carbohydrate abundance such as occurs during fasting to feeding metabolic transition. At fasting state, appears to dephosphorylate ACLY on Ser-455 and inactivate it. Refeeding stimulates MLXIPL/ChREBP transcription factor, leading to increased BCKDK to PPM1K expression ratio, phosphorylation and activation of ACLY that ultimately results in the generation of malonyl-CoA and oxaloacetate immediate substrates of de novo lipogenesis and gluconeogenesis, respectively. Recognizes phosphosites having SxS or RxxS motifs and strictly depends on Mn(2+) ions for the phosphatase activity. Regulates Ca(2+)-induced opening of mitochondrial transition pore and apoptotic cell death. This Mus musculus (Mouse) protein is Protein phosphatase Mn(2+)-dependent 1K.